A 1690-amino-acid chain; its full sequence is Lysine-specific demethylase 5A (1690 aa).

The JmjN domain occupies 19–60 (CPVFEPSWEEFTDPLSFIGRIRPLAEKTGICKIRPPKDWQPP). The 91-residue stretch at 84–174 (TRVRLDFLDQ…ILYPYELFQS (91 aa)) folds into the ARID domain. Lys-191 is covalently cross-linked (Glycyl lysine isopeptide (Lys-Gly) (interchain with G-Cter in SUMO2)). Ser-204 bears the Phosphoserine mark. Residues 293 to 343 (LYVCMFCGRGNNEDKLLLCDGCDDSYHTFCLIPPLPDVPKGDWRCPKCVAE) form a PHD-type 1 zinc finger. Tyr-409 is a binding site for 2-oxoglutarate. The GSGFP motif motif lies at 419–423 (GSGFP). Positions 437–603 (EYALSGWNLN…IGRQCVNHYR (167 aa)) constitute a JmjC domain. Residues His-483 and Glu-485 each contribute to the Fe cation site. 2-oxoglutarate contacts are provided by Ser-491, Asn-493, and Lys-501. His-571 lines the Fe cation pocket. A C5HC2 zinc finger spans residues 676–728 (CSACRTTCFLSALTCSCNPERLVCLYHPTDLCPCPMQKKCLRYRYPLEDLPSL). Lys-1007 participates in a covalent cross-link: Glycyl lysine isopeptide (Lys-Gly) (interchain with G-Cter in SUMO2). Phosphoserine is present on Ser-1111. The segment at 1161–1218 (VKFCICRKTASGFMLQCELCKDWFHNSCVPLPKSSSQKKGSSWQAKEVKFLCPLCMRS) adopts a PHD-type 2 zinc-finger fold. 2 disordered regions span residues 1327–1348 (SVSS…SDED) and 1407–1433 (KSCS…LEPP). Ser-1330 and Ser-1331 each carry phosphoserine. The span at 1337–1348 (DYDDEETDSDED) shows a compositional bias: acidic residues. Thr-1343 is subject to Phosphothreonine. Residue Ser-1345 is modified to Phosphoserine. 2 positions are modified to phosphoserine: Ser-1438 and Ser-1488. Basic and acidic residues-rich tracts occupy residues 1490–1503 (EEKP…DSSE) and 1520–1530 (GKQKSKELKKM). Disordered stretches follow at residues 1490 to 1509 (EEKP…RKRK) and 1516 to 1543 (LFGE…LGAD). Tyr-1595 carries the phosphotyrosine modification. 2 positions are modified to phosphoserine: Ser-1598 and Ser-1603. The PHD-type 3 zinc-finger motif lies at 1607 to 1661 (NAVCAAQNCQRPCKDKVDWVQCDGGCDEWFHQVCVGVSPEMAENEDYICINCAKK). The interval 1623-1690 (VDWVQCDGGC…LPMEDLKETS (68 aa)) is interaction with LMO2. A Phosphoserine modification is found at Ser-1666.

It belongs to the JARID1 histone demethylase family. As to quaternary structure, interacts with SUZ12; the interaction is direct. Interacts with the viral protein-binding domain of RB1. Interacts with ESR1, MYC, MYCN and LMO2. Interacts with HDAC1; this interaction impairs histone deacetylation by HDAC1. Interacts with BMAL1 and CLOCK. Interacts (via PHD-type 1 zinc finger) with histone H3 unmodified at 'Lys-4' and (via PHD-type 3 zinc finger) with histone H3 di- and trimethylated at 'Lys-4'. Fe(2+) serves as cofactor.

The protein resides in the nucleus. The protein localises to the nucleolus. The catalysed reaction is N(6),N(6),N(6)-trimethyl-L-lysyl(4)-[histone H3] + 3 2-oxoglutarate + 3 O2 = L-lysyl(4)-[histone H3] + 3 formaldehyde + 3 succinate + 3 CO2. With respect to regulation, the inhibitors KDOAM-25, CPI-455 and others inhibits its demethylase activity, resulting to cell growth arrest in cancer cells. Functionally, histone demethylase that specifically demethylates 'Lys-4' of histone H3, thereby playing a central role in histone code. Does not demethylate histone H3 'Lys-9', H3 'Lys-27', H3 'Lys-36', H3 'Lys-79' or H4 'Lys-20'. Demethylates trimethylated and dimethylated but not monomethylated H3 'Lys-4'. Regulates specific gene transcription through DNA-binding on 5'-CCGCCC-3' motif. May stimulate transcription mediated by nuclear receptors. Involved in transcriptional regulation of Hox proteins during cell differentiation. May participate in transcriptional repression of cytokines such as CXCL12. Plays a role in the regulation of the circadian rhythm and in maintaining the normal periodicity of the circadian clock. In a histone demethylase-independent manner, acts as a coactivator of the CLOCK-BMAL1-mediated transcriptional activation of PER1/2 and other clock-controlled genes and increases histone acetylation at PER1/2 promoters by inhibiting the activity of HDAC1. Seems to act as a transcriptional corepressor for some genes such as MT1F and to favor the proliferation of cancer cells. In Homo sapiens (Human), this protein is Lysine-specific demethylase 5A.